The primary structure comprises 248 residues: DNA repair protein RecO (248 aa).

It belongs to the RecO family.

Functionally, involved in DNA repair and RecF pathway recombination. The polypeptide is DNA repair protein RecO (Bartonella tribocorum (strain CIP 105476 / IBS 506)).